The primary structure comprises 462 residues: MAQIILDDKLEKLNVNPVFVDLKNQQDKSIIVQNYENHQTIKRTVPNALIDMIKFAWANHLPVSLRPDDFWIQILTQFATHVNLNSELYQKYFSNKDNPDSETQISIGYTDFDNVQDVPIDDFVQKILSKLNECIERNDLITKLQCDFTTSNSITLLTSQIAFMYMADKFFSYKMILGCGIPSIKLDGTIDDWTNLKSKIRTLLEIADDKIKSWLSNLEIITNKIITSIKYPGVFVNFWKKMFYVERCGSGSQTCSKGWICHLFLYDKSYCKLGHVFDSENELYDLKGITFWDDFPNCEVKCPFMVNSESRPHYLNAGIYGFTMIDDHLRLISGFTVSKLDYDEWSFDDKPIHILKINFSQETYSRIKYNGKLIHEWYQITGVTNEDRLEYDCDNTIIYYNTESSSIDFIYRGENKYGPVCSYQKVKFTDGGVKVTSKGSASLEYFIKNSIKIYEERDSTHN.

This is an uncharacterized protein from Acanthamoeba polyphaga (Amoeba).